The chain runs to 228 residues: Histidine/lysine/arginine/ornithine transport system permease protein HisQ (228 aa).

Topologically, residues 1–12 are periplasmic; the sequence is MLYGFSGVILQG. The helical transmembrane segment at 13–33 threads the bilayer; it reads AIVTLELALSSVVLAVLIGLV. An ABC transmembrane type-1 domain is found at 13–212; that stretch reads AIVTLELALS…VFTTVSNGVL (200 aa). At 34–58 the chain is on the cytoplasmic side; that stretch reads GAGAKLSQNRVTGLIFEGYTTLIRG. Residues 59 to 79 form a helical membrane-spanning segment; it reads VPDLVLMLLIFYGLQIALNVV. Over 80 to 87 the chain is Periplasmic; sequence TDSLGIDQ. The chain crosses the membrane as a helical span at residues 88-108; the sequence is IDIDPMVAGIITLGFIYGAYF. Over 109-152 the chain is Cytoplasmic; that stretch reads TETFRGAFMAVPKGHIEAATAFGFTHGQTFRRIMFPAMMRYALP. The chain crosses the membrane as a helical span at residues 153–173; it reads GIGNNWQVILKATALVSLLGL. Topologically, residues 174 to 194 are periplasmic; sequence EDVVKATQLAGKSTWEPFYFA. The chain crosses the membrane as a helical span at residues 195–215; sequence VVCGLIYLVFTTVSNGVLLLL. The Cytoplasmic segment spans residues 216–228; the sequence is ERRYSVGVKRADL.

This sequence belongs to the binding-protein-dependent transport system permease family. HisMQ subfamily. The HisPMQJ complex is composed of two ATP-binding proteins (HisP), two transmembrane proteins (HisM and HisQ) and a solute-binding protein (HisJ). The HisPMQ-ArgT complex is composed of two ATP-binding proteins (HisP), two transmembrane proteins (HisM and HisQ) and a solute-binding protein (ArgT).

The protein resides in the cell inner membrane. Its function is as follows. Part of the ABC transporter complex HisPMQJ involved in histidine transport. Is also part of the ABC transporter complex HisPMQ-ArgT involved in lysine/arginine/ornithine transport. Probably responsible for the translocation of the substrate across the membrane. In Salmonella typhi, this protein is Histidine/lysine/arginine/ornithine transport system permease protein HisQ (hisQ).